A 479-amino-acid polypeptide reads, in one-letter code: Outer membrane protein OprJ (479 aa).

An N-terminal signal peptide occupies residues 1-19; that stretch reads MRKPAFGVSALLIALTLGA. Cys-20 carries N-palmitoyl cysteine lipidation. Cys-20 carries S-diacylglycerol cysteine lipidation. The tract at residues 102–121 is disordered; the sequence is LNAAATGNRQRQPADLSAGN.

This sequence belongs to the outer membrane factor (OMF) (TC 1.B.17) family.

It is found in the cell outer membrane. In terms of biological role, channel-forming component of a multidrug resistance efflux pump. This is Outer membrane protein OprJ (oprJ) from Pseudomonas aeruginosa (strain ATCC 15692 / DSM 22644 / CIP 104116 / JCM 14847 / LMG 12228 / 1C / PRS 101 / PAO1).